The following is a 419-amino-acid chain: Dynein regulatory complex protein 9 (419 aa).

Disordered stretches follow at residues 1–47 and 393–419; these read MEGE…SPEV and SFKM…RGKK. The segment covering 34-44 has biased composition (acidic residues); the sequence is EELEEEEEETS. Residues 371-400 enclose the IQ domain; it reads ELRSIVKLQAWWRGTVVRREIGSFKMPKKE.

The protein belongs to the DRC9 family. Component of the nexin-dynein regulatory complex (N-DRC). Interacts (via IQ domain) with CALM when calcium levels are low. Does not interact with CALM in the presence of Ca(2+). Interacts with the HSP70 proteins HSPA1L and HSPA8. May form a complex with CAMK4 and HSP70.

It localises to the cytoplasm. The protein resides in the cell projection. Its subcellular location is the cilium. The protein localises to the flagellum. It is found in the cytoskeleton. It localises to the flagellum axoneme. Functionally, component of the nexin-dynein regulatory complex (N-DRC), a key regulator of ciliary/flagellar motility which maintains the alignment and integrity of the distal axoneme and regulates microtubule sliding in motile axonemes. Binds calmodulin when cellular Ca(2+) levels are low and thereby contributes to the regulation of calcium and calmodulin-dependent protein kinase IV (CAMK4) activity; contributes to the regulation of CAMK4 signaling cascades. Required for normal axoneme assembly in sperm flagella, normal sperm tail formation and for male fertility. This is Dynein regulatory complex protein 9 (Iqcg) from Rattus norvegicus (Rat).